Reading from the N-terminus, the 180-residue chain is MNSLLSRANSLFAFTLSVMAALTLGCILTTAFKDRSAPVRLHVSRILLKKVEDFTGPRKKSDLGFITFHISADLEKTFDWNVKQLFLYLSAEYSTKSNAVNQVVLWDKILLRGENPKLNLKDVKSKYFFFDDGHGLKGNRNVTLTLSWQVIPIAGILPLVTGSGRVSVPFPDSYEIATTF.

The Cytoplasmic portion of the chain corresponds to 1–11 (MNSLLSRANSL). The helical; Signal-anchor for type II membrane protein transmembrane segment at 12–32 (FAFTLSVMAALTLGCILTTAF) threads the bilayer. Residues 33–180 (KDRSAPVRLH…PDSYEIATTF (148 aa)) lie on the Lumenal side of the membrane. Residue Asn141 is glycosylated (N-linked (GlcNAc...) asparagine).

It belongs to the SPCS3 family. Strongly expressed in epididymal white and brown adipose tissue with low levels in heart.

It is found in the endoplasmic reticulum membrane. Its function is as follows. Plays a role in adipogenesis. This chain is Adipocyte-related X-chromosome expressed sequence 1, found in Mus musculus (Mouse).